The sequence spans 58 residues: UPF0391 membrane protein Sfri_4000 (58 aa).

Transmembrane regions (helical) follow at residues 6–26 (LMFL…IAGA) and 27–47 (AAGI…ISLV).

This sequence belongs to the UPF0391 family.

The protein resides in the cell membrane. This chain is UPF0391 membrane protein Sfri_4000, found in Shewanella frigidimarina (strain NCIMB 400).